Here is a 753-residue protein sequence, read N- to C-terminus: Pesticidal crystal protein Cry20Aa (753 aa).

The segment covering 680 to 696 (DTTYQPSYDNYNQNASG) has biased composition (polar residues). A disordered region spans residues 680–721 (DTTYQPSYDNYNQNASGTYDDGYNPNASDSYDQSYTNNYSQN). Positions 712-721 (QSYTNNYSQN) are enriched in low complexity.

This sequence belongs to the delta endotoxin family. In terms of processing, has low mosquitocidal activity probably due to rapid proteolysis to inactive 56 kDa and 43 kDa proteins.

In terms of biological role, promotes colloidosmotic lysis by binding to the midgut epithelial cells of mosquitos. Active against Aedes aegypti and Culex quinquefasciatus larvae. The sequence is that of Pesticidal crystal protein Cry20Aa (cry20Aa) from Bacillus thuringiensis subsp. fukuokaensis.